We begin with the raw amino-acid sequence, 862 residues long: AP-1 complex subunit gamma-2 (862 aa).

11 HEAT repeats span residues 1-28, 29-65, 101-136, 137-173, 308-345, 346-382, 384-417, 418-454, 458-496, 507-545, and 560-599; these read MNPF…EERA, VVRK…LGYP, EVLM…CSAE, MARD…KVPD, GLRV…VDSQ, AVQR…ENNV, PLAK…KFAP, EKIW…NAPD, YTVR…NNAG, TESD…RFPS, and SFVL…ATFS. Residues 744–859 enclose the GAE domain; the sequence is AAYPSIVAFE…LEEGQINNFP (116 aa).

The protein belongs to the adaptor complexes large subunit family. Adaptor protein complex 1 (AP-1) is a heterotetramer composed of two large adaptins (gamma-type subunit and beta-type subunit), a medium adaptin (mu-type subunit) and a small adaptin (sigma-type subunit).

It is found in the golgi apparatus. It localises to the cytoplasmic vesicle. The protein resides in the clathrin-coated vesicle membrane. In terms of biological role, subunit of clathrin-associated adaptor protein complex 1 that plays a role in protein sorting at the trans-Golgi network and early endosomes (TGN/EE). The AP complexes mediate both the recruitment of clathrin to membranes and the recognition of sorting signals within the cytosolic tails of transmembrane cargo molecules. The polypeptide is AP-1 complex subunit gamma-2 (Arabidopsis thaliana (Mouse-ear cress)).